Consider the following 286-residue polypeptide: Hypersensitive-induced response protein 1 (286 aa).

Gly2 is lipidated: N-myristoyl glycine. Residues 114-190 are a coiled coil; the sequence is LDDVFEQKND…EKILQIKRAE (77 aa).

Self-interacts and forms heteromers. Interacts with NB-LRR class of R proteins before R proteins (e.g. RPS2 or RPM1) are activated by the effectors. Interacts with LRR1.

It is found in the cell membrane. Its function is as follows. Positive regulator of hypersensitive response (HR)-like cell death. May be involved in potassium ion channel regulation. The chain is Hypersensitive-induced response protein 1 from Arabidopsis thaliana (Mouse-ear cress).